A 990-amino-acid polypeptide reads, in one-letter code: Kinesin-related protein 5 (990 aa).

One can recognise a Kinesin motor domain in the interval 6–330; it reads NIRVMCRFRP…LKFGARAKSI (325 aa). ATP is bound at residue 83–90; it reads GQTGSGKT. Disordered regions lie at residues 401 to 485 and 732 to 788; these read QSNS…SSID and FSSS…QDQQ. A compositionally biased stretch (gly residues) spans 406 to 418; sequence SGGGGSGSSGGSS. 2 stretches are compositionally biased toward low complexity: residues 466 to 485 and 733 to 781; these read TSSISSSSISSMSSLSSSID and SSSN…PSSN. Residues 513 to 948 adopt a coiled-coil conformation; the sequence is IEMEKMKEDT…DQLISTQRLI (436 aa).

This sequence belongs to the TRAFAC class myosin-kinesin ATPase superfamily. Kinesin family. Kinesin subfamily. As to quaternary structure, interacts with actin.

It is found in the cytoplasm. It localises to the cytoskeleton. Functionally, microtubule-associated force-producing protein that plays a role in organelle transport. Its motor activity is directed toward the microtubule's plus end. May connect microtubules to actin filaments. Associates with actin-based structures in cells and is likely involved in the organization of actin cytoskeletons in such structures. In Dictyostelium discoideum (Social amoeba), this protein is Kinesin-related protein 5 (kif5).